The following is a 497-amino-acid chain: Acetyl-coenzyme A carboxylase carboxyl transferase subunit beta (497 aa).

The CoA carboxyltransferase N-terminal domain maps to 217 to 489 (LWLQCDNCYG…NQNSNQYSQY (273 aa)). Residues cysteine 221, cysteine 224, cysteine 240, and cysteine 243 each contribute to the Zn(2+) site. The segment at 221–243 (CDNCYGLNYKKVLKSKMTICEQC) adopts a C4-type zinc-finger fold.

It belongs to the AccD/PCCB family. In terms of assembly, acetyl-CoA carboxylase is a heterohexamer composed of biotin carboxyl carrier protein, biotin carboxylase and 2 subunits each of ACCase subunit alpha and ACCase plastid-coded subunit beta (accD). Requires Zn(2+) as cofactor.

The protein localises to the plastid. It catalyses the reaction N(6)-carboxybiotinyl-L-lysyl-[protein] + acetyl-CoA = N(6)-biotinyl-L-lysyl-[protein] + malonyl-CoA. Its pathway is lipid metabolism; malonyl-CoA biosynthesis; malonyl-CoA from acetyl-CoA: step 1/1. Its function is as follows. Component of the acetyl coenzyme A carboxylase (ACC) complex. Biotin carboxylase (BC) catalyzes the carboxylation of biotin on its carrier protein (BCCP) and then the CO(2) group is transferred by the transcarboxylase to acetyl-CoA to form malonyl-CoA. This is Acetyl-coenzyme A carboxylase carboxyl transferase subunit beta from Cuscuta reflexa (Southern Asian dodder).